The sequence spans 549 residues: Arginine--tRNA ligase (549 aa).

The short motif at A113–H123 is the 'HIGH' region element.

It belongs to the class-I aminoacyl-tRNA synthetase family.

It is found in the cytoplasm. The catalysed reaction is tRNA(Arg) + L-arginine + ATP = L-arginyl-tRNA(Arg) + AMP + diphosphate. The polypeptide is Arginine--tRNA ligase (argS) (Archaeoglobus fulgidus (strain ATCC 49558 / DSM 4304 / JCM 9628 / NBRC 100126 / VC-16)).